The chain runs to 257 residues: Ribosomal RNA small subunit methyltransferase A (257 aa).

6 residues coordinate S-adenosyl-L-methionine: Asn-12, Leu-14, Gly-39, Glu-60, Asp-85, and Asn-105.

This sequence belongs to the class I-like SAM-binding methyltransferase superfamily. rRNA adenine N(6)-methyltransferase family. RsmA subfamily.

It is found in the cytoplasm. The catalysed reaction is adenosine(1518)/adenosine(1519) in 16S rRNA + 4 S-adenosyl-L-methionine = N(6)-dimethyladenosine(1518)/N(6)-dimethyladenosine(1519) in 16S rRNA + 4 S-adenosyl-L-homocysteine + 4 H(+). In terms of biological role, specifically dimethylates two adjacent adenosines (A1518 and A1519) in the loop of a conserved hairpin near the 3'-end of 16S rRNA in the 30S particle. May play a critical role in biogenesis of 30S subunits. The sequence is that of Ribosomal RNA small subunit methyltransferase A from Methylococcus capsulatus (strain ATCC 33009 / NCIMB 11132 / Bath).